The following is a 166-amino-acid chain: Ribosome maturation factor RimP (166 aa).

The protein belongs to the RimP family.

The protein resides in the cytoplasm. In terms of biological role, required for maturation of 30S ribosomal subunits. This Paramagnetospirillum magneticum (strain ATCC 700264 / AMB-1) (Magnetospirillum magneticum) protein is Ribosome maturation factor RimP.